The sequence spans 915 residues: DNA (cytosine-5)-methyltransferase 2 (915 aa).

The span at 1–14 (MAPSSPSSARPTRA) shows a compositional bias: low complexity. Positions 1 to 171 (MAPSSPSSAR…STAANKPEED (171 aa)) are disordered. Over residues 15–30 (SGRERSAMAEEIHQNQ) the composition is skewed to basic and acidic residues. Basic residues predominate over residues 42-57 (AKRRRKAASSGKKPKP). Over residues 71–80 (KKGETEKTEP) the composition is skewed to basic and acidic residues. The segment covering 81–108 (VVDDVCAEEPDEEELAMGEEEAEAEEQA) has biased composition (acidic residues). Residues 109 to 119 (MQEVVAAVAAG) are compositionally biased toward low complexity. The BAH domain maps to 188–313 (IVYCLGDDVY…VAYSTFANIS (126 aa)). Residues 315 to 328 (ENGQSGSETASGIS) are compositionally biased toward polar residues. The tract at residues 315–338 (ENGQSGSETASGISSDDAGLETSS) is disordered. Residues 345-876 (ATLLDLYSGC…YCLGQAYLGE (532 aa)) enclose the SAM-dependent MTase C5-type domain. One can recognise a Chromo domain in the interval 445–508 (FVVQKLIGIR…EGRKRKILPL (64 aa)). Cys-521 is an active-site residue.

This sequence belongs to the class I-like SAM-binding methyltransferase superfamily. C5-methyltransferase family.

The protein localises to the nucleus. The enzyme catalyses a 2'-deoxycytidine in DNA + S-adenosyl-L-methionine = a 5-methyl-2'-deoxycytidine in DNA + S-adenosyl-L-homocysteine + H(+). Functionally, may be involved in the CpXpG methylation and in gene silencing. The polypeptide is DNA (cytosine-5)-methyltransferase 2 (ZMET5) (Zea mays (Maize)).